The chain runs to 106 residues: Large ribosomal subunit protein uL24 (106 aa).

This sequence belongs to the universal ribosomal protein uL24 family. As to quaternary structure, part of the 50S ribosomal subunit.

Functionally, one of two assembly initiator proteins, it binds directly to the 5'-end of the 23S rRNA, where it nucleates assembly of the 50S subunit. In terms of biological role, one of the proteins that surrounds the polypeptide exit tunnel on the outside of the subunit. The chain is Large ribosomal subunit protein uL24 from Azobacteroides pseudotrichonymphae genomovar. CFP2.